The chain runs to 193 residues: Cysteine and glycine-rich protein 2 (193 aa).

One can recognise an LIM zinc-binding 1 domain in the interval 10–61 (CGACGRTVYHAEEVQCDGRSFHRCCFLCMVCRKNLDSTTVAIHDEEIYCKSC). Residues 64–69 (KKYGPK) carry the Nuclear localization signal motif. Lys-91 is covalently cross-linked (Glycyl lysine isopeptide (Lys-Gly) (interchain with G-Cter in SUMO2)). N6-acetyllysine is present on residues Lys-112 and Lys-131. Residues 119–170 (CSRCGDSVYAAEKIIGAGKPWHKNCFRCAKCGKSLESTTLTEKEGEIYCKGC) enclose the LIM zinc-binding 2 domain. At Lys-137 the chain carries N6-acetyllysine; alternate. Lys-137 bears the N6-succinyllysine; alternate mark. Lys-161 carries the post-translational modification N6-acetyllysine.

In terms of assembly, interacts with KAT14. The LIM domain 1 is necessary and sufficient for this interaction. Interacts with GLRX3.

The protein resides in the nucleus. Its function is as follows. Drastically down-regulated in response to PDGF-BB or cell injury, that promote smooth muscle cell proliferation and dedifferentiation. Seems to play a role in the development of the embryonic vascular system. The polypeptide is Cysteine and glycine-rich protein 2 (CSRP2) (Bos taurus (Bovine)).